The sequence spans 335 residues: Methyltransferase pgmE (335 aa).

Belongs to the methyltransferase superfamily.

Its pathway is pigment biosynthesis. It functions in the pathway secondary metabolite biosynthesis. Methyltransferase; part of the gene cluster that mediates the biosynthesis of pleosporalin A, ascomycone A, as well as a third cryptic naphthoquinone derived pigment, all responsible for the coloration of conidia. Essential for the production of pleosporalin A, but not the 2 other final products. The pathway begins with the biosynthesis of the cyclized heptaketide 3-acetonyl-1,6,8-trihydroxy-2-naphthaldehyde by the NR-PKS pgmA. The C-6 hydroxyl group is further methylated by the O-methyltransferase pgmB to yield fusarubinaldehyde which is in turn oxidized by the cytochrome P450 monooxygenase pgmC at C-9. The C-1 hydroxyl group is then methylated spontaneously. Although pgmE, pgmD and pgmH are essential for the production of pleosporalin A, it is not the case for the 2 other final products and it remains difficult to assign a specific function to each enzyme. PgmF and pgmG seem not to be involved in pigment biosynthesis although they were regulated by the cluster-specific transcription factor pgmR. This is Methyltransferase pgmE from Aspergillus terreus.